The following is a 421-amino-acid chain: MRVIVLGSGVIGVASAYYLARQGAEVTVLDRQSGPAEETSFGNAGQISPGYSTPWAAPGIPFKAVKWMFQHHAPLAINLDGSMWQLQWMAQMLKNCNPQSYAVNKERMMRVAEYSRDCLRELRKDTGIHYENRAKGTLQLFRKEAQMEAVQRDISVLEECGVSYELLNGNELGRVEPALANAQDKLVGGLHLPNDETGDCYLFTNALAQIAKELGVNFQFNQNVEKLIVEGDQIKGVQVNGKVLTADRYVLAFGSYSRDFLKPLDLQLPVYPVKGYSLTIPIVDPAFAPQSTVLDETYKIAITRFDQRIRVGGMAELSGFNLGLNEDRRATLQMVTQDLFPGGDMAQASFWTGLRPMTPDSTPIIGATRFKNLFLNTGHGTLGWTMACGSGKLISDIVLNHKTDISTDGLSIQRYSHAHAA.

3-17 (VIVLGSGVIGVASAY) is an FAD binding site.

The protein belongs to the DadA oxidoreductase family. FAD is required as a cofactor.

The catalysed reaction is a D-alpha-amino acid + A + H2O = a 2-oxocarboxylate + AH2 + NH4(+). It functions in the pathway amino-acid degradation; D-alanine degradation; NH(3) and pyruvate from D-alanine: step 1/1. Oxidative deamination of D-amino acids. In Acinetobacter baumannii (strain AB307-0294), this protein is D-amino acid dehydrogenase.